Consider the following 1194-residue polypeptide: Immunoglobulin superfamily member 3 (1194 aa).

An N-terminal signal peptide occupies residues 1-19; the sequence is MKCFFPVLSCLAVLGVVSA. Ig-like C2-type domains follow at residues 20 to 138, 143 to 262, 276 to 386, 401 to 539, 545 to 661, 676 to 803, 813 to 945, and 949 to 1097; these read QRQV…AKMN, PDSL…WYAM, PTDK…KTVT, PIIV…ISIT, FAVT…WTRL, PVTK…EEVS, PDSR…TALT, and PDAS…YRLT. Residues 20 to 1124 lie on the Extracellular side of the membrane; it reads QRQVTVQEGP…LQSIICSNDA (1105 aa). Intrachain disulfides connect Cys42–Cys120 and Cys167–Cys246. N-linked (GlcNAc...) asparagine glycosylation is present at Asn43. An EWI motif motif is present at residues 250-252; the sequence is EWI. Residues Cys302 and Cys376 are joined by a disulfide bond. The N-linked (GlcNAc...) asparagine glycan is linked to Asn418. Cystine bridges form between Cys432-Cys511 and Cys566-Cys645. The N-linked (GlcNAc...) asparagine glycan is linked to Asn655. Cystine bridges form between Cys701–Cys782, Cys838–Cys918, and Cys974–Cys1080. Asn842 is a glycosylation site (N-linked (GlcNAc...) asparagine). Residues 997–1033 are disordered; sequence AGGKRSSPGLEEQEEEREEEEEEDDDDDDDPTERTAL. The span at 1007–1027 shows a compositional bias: acidic residues; that stretch reads EEQEEEREEEEEEDDDDDDDP. N-linked (GlcNAc...) asparagine glycosylation occurs at Asn1077. The chain crosses the membrane as a helical span at residues 1125-1145; it reads LFYFVFFYPFPIFGILIITIL. Residues 1146–1194 are Cytoplasmic-facing; sequence LVRFKSRNSSKNSDGKNGVPLLWIKEPHLNYSPTCLEPPVLSIHPGAID.

As to expression, expressed in a wide range of tissues with High expression in Placenta, kidney and lung.

The protein resides in the membrane. The protein is Immunoglobulin superfamily member 3 (IGSF3) of Homo sapiens (Human).